Reading from the N-terminus, the 68-residue chain is Small integral membrane protein 45 (68 aa).

A helical transmembrane segment spans residues 7-27; it reads WFVPVYLVISVLILVGFGACI.

Highly expressed in brain.

Its subcellular location is the nucleus. It is found in the cytoplasm. The protein localises to the membrane. In terms of biological role, plays a role in the regulation of neuron maturation. The sequence is that of Small integral membrane protein 45 from Homo sapiens (Human).